A 282-amino-acid chain; its full sequence is Probable endonuclease 4 (282 aa).

The Zn(2+) site is built by His69, His109, Glu145, Asp179, His182, His216, Asp229, His231, and Glu261.

Belongs to the AP endonuclease 2 family. It depends on Zn(2+) as a cofactor.

The enzyme catalyses Endonucleolytic cleavage to 5'-phosphooligonucleotide end-products.. Endonuclease IV plays a role in DNA repair. It cleaves phosphodiester bonds at apurinic or apyrimidinic (AP) sites, generating a 3'-hydroxyl group and a 5'-terminal sugar phosphate. The polypeptide is Probable endonuclease 4 (Campylobacter fetus subsp. fetus (strain 82-40)).